A 534-amino-acid polypeptide reads, in one-letter code: C-22 sterol desaturase ERG5B (534 aa).

Residues 43 to 61 (IAVTIFAVLIAYDQFMYIW) form a helical membrane-spanning segment. Cys480 contacts heme.

Belongs to the cytochrome P450 family. Heme serves as cofactor.

The protein resides in the endoplasmic reticulum membrane. The catalysed reaction is 5-dehydroepisterol + NADPH + O2 + H(+) = ergosta-5,7,22,24(28)-tetraen-3beta-ol + NADP(+) + 2 H2O. It functions in the pathway steroid metabolism; ergosterol biosynthesis. C-22 sterol desaturase; part of the third module of ergosterol biosynthesis pathway that includes the late steps of the pathway. ERG5A and ERG5B convert 5-dehydroepisterol into ergosta-5,7,22,24(28)-tetraen-3beta-ol by forming the C-22(23) double bond in the sterol side chain. The third module or late pathway involves the ergosterol synthesis itself through consecutive reactions that mainly occur in the endoplasmic reticulum (ER) membrane. Firstly, the squalene synthase ERG9 catalyzes the condensation of 2 farnesyl pyrophosphate moieties to form squalene, which is the precursor of all steroids. Squalene synthase is crucial for balancing the incorporation of farnesyl diphosphate (FPP) into sterol and nonsterol isoprene synthesis. Secondly, squalene is converted into lanosterol by the consecutive action of the squalene epoxidase ERG1 and the lanosterol synthase ERG7. Then, the delta(24)-sterol C-methyltransferase ERG6 methylates lanosterol at C-24 to produce eburicol. Eburicol is the substrate of the sterol 14-alpha demethylase encoded by CYP51A, CYP51B and CYP51C, to yield 4,4,24-trimethyl ergosta-8,14,24(28)-trienol. CYP51B encodes the enzyme primarily responsible for sterol 14-alpha-demethylation, and plays an essential role in ascospore formation. CYP51A encodes an additional sterol 14-alpha-demethylase, induced on ergosterol depletion and responsible for the intrinsic variation in azole sensitivity. The third CYP51 isoform, CYP51C, does not encode a sterol 14-alpha-demethylase, but is required for full virulence on host wheat ears. The C-14 reductase ERG24 then reduces the C14=C15 double bond which leads to 4,4-dimethylfecosterol. A sequence of further demethylations at C-4, involving the C-4 demethylation complex containing the C-4 methylsterol oxidases ERG25, the sterol-4-alpha-carboxylate 3-dehydrogenase ERG26 and the 3-keto-steroid reductase ERG27, leads to the production of fecosterol via 4-methylfecosterol. ERG28 has a role as a scaffold to help anchor ERG25, ERG26 and ERG27 to the endoplasmic reticulum. The C-8 sterol isomerase ERG2 then catalyzes the reaction which results in unsaturation at C-7 in the B ring of sterols and thus converts fecosterol to episterol. The sterol-C5-desaturases ERG3A and ERG3BB then catalyze the introduction of a C-5 double bond in the B ring to produce 5-dehydroepisterol. The C-22 sterol desaturases ERG5A and ERG5B further convert 5-dehydroepisterol into ergosta-5,7,22,24(28)-tetraen-3beta-ol by forming the C-22(23) double bond in the sterol side chain. Finally, ergosta-5,7,22,24(28)-tetraen-3beta-ol is substrate of the C-24(28) sterol reductase ERG4 to produce ergosterol. The protein is C-22 sterol desaturase ERG5B of Gibberella zeae (strain ATCC MYA-4620 / CBS 123657 / FGSC 9075 / NRRL 31084 / PH-1) (Wheat head blight fungus).